The chain runs to 150 residues: 3-hydroxyacyl-[acyl-carrier-protein] dehydratase FabZ (150 aa).

Histidine 56 is an active-site residue.

It belongs to the thioester dehydratase family. FabZ subfamily.

The protein localises to the cytoplasm. The catalysed reaction is a (3R)-hydroxyacyl-[ACP] = a (2E)-enoyl-[ACP] + H2O. Functionally, involved in unsaturated fatty acids biosynthesis. Catalyzes the dehydration of short chain beta-hydroxyacyl-ACPs and long chain saturated and unsaturated beta-hydroxyacyl-ACPs. In Desulfotalea psychrophila (strain LSv54 / DSM 12343), this protein is 3-hydroxyacyl-[acyl-carrier-protein] dehydratase FabZ.